A 43-amino-acid polypeptide reads, in one-letter code: Metallothionein B (43 aa).

The segment at 1 to 16 (SCAGSCKCKNCRCRSC) is beta. The a divalent metal cation site is built by C2, C6, C8, C11, C13, C16, C20, C21, C23, C24, C28, C31, C35, and C37. The interval 17–43 (RKSCCSCCPAGCNNCVKGCVCKEPASS) is alpha.

Belongs to the metallothionein superfamily. Type 1 family.

In terms of biological role, metallothioneins have a high content of cysteine residues that bind various heavy metals. This Colinus virginianus (Northern bobwhite) protein is Metallothionein B.